The following is a 344-amino-acid chain: Tetraacyldisaccharide 4'-kinase (344 aa).

Residue 65 to 72 participates in ATP binding; the sequence is HAGGTGKT.

This sequence belongs to the LpxK family.

The enzyme catalyses a lipid A disaccharide + ATP = a lipid IVA + ADP + H(+). It participates in glycolipid biosynthesis; lipid IV(A) biosynthesis; lipid IV(A) from (3R)-3-hydroxytetradecanoyl-[acyl-carrier-protein] and UDP-N-acetyl-alpha-D-glucosamine: step 6/6. Transfers the gamma-phosphate of ATP to the 4'-position of a tetraacyldisaccharide 1-phosphate intermediate (termed DS-1-P) to form tetraacyldisaccharide 1,4'-bis-phosphate (lipid IVA). In Neisseria meningitidis serogroup B (strain ATCC BAA-335 / MC58), this protein is Tetraacyldisaccharide 4'-kinase.